The following is a 357-amino-acid chain: Adenosine deaminase (357 aa).

Zn(2+) is bound by residues histidine 16 and histidine 18. Substrate contacts are provided by histidine 18, aspartate 20, and glycine 185. Histidine 212 provides a ligand contact to Zn(2+). The active-site Proton donor is glutamate 215. Zn(2+) is bound at residue aspartate 294. Aspartate 295 contacts substrate.

It belongs to the metallo-dependent hydrolases superfamily. Adenosine and AMP deaminases family. It depends on Zn(2+) as a cofactor.

The protein localises to the cell membrane. It is found in the cell junction. It localises to the cytoplasmic vesicle lumen. Its subcellular location is the cytoplasm. The protein resides in the lysosome. It catalyses the reaction adenosine + H2O + H(+) = inosine + NH4(+). It carries out the reaction 2'-deoxyadenosine + H2O + H(+) = 2'-deoxyinosine + NH4(+). In terms of biological role, catalyzes the hydrolytic deamination of adenosine and 2-deoxyadenosine. Plays an important role in purine metabolism and in adenosine homeostasis. Modulates signaling by extracellular adenosine, and so contributes indirectly to cellular signaling events. May act as a positive regulator of T-cell coactivation. The protein is Adenosine deaminase (ADA) of Gallus gallus (Chicken).